The primary structure comprises 523 residues: F-box only protein 31-B (523 aa).

Residues P59–R105 enclose the F-box domain. The Zn(2+) site is built by C201, H209, C225, and H231. The segment at I372–V427 is disordered. Composition is skewed to basic and acidic residues over residues G386–H396 and P406–K423.

Belongs to the FBXO31 family. As to quaternary structure, part of a SCF (SKP1-cullin-F-box) protein ligase complex SCF(FBXO31).

The protein localises to the cytoplasm. Its pathway is protein modification; protein ubiquitination. Substrate-recognition component of the SCF(FBXO31) protein ligase complex, which specifically mediates the ubiquitination of proteins amidated at their C-terminus in response to oxidative stress, leading to their degradation by the proteasome. Fbxo31 specifically recognizes and binds C-terminal peptides bearing an amide: C-terminal amidation in response to oxidative stress takes place following protein fragmentation. The SCF(FBXO31) also plays a role in G1 arrest following DNA damage by mediating ubiquitination of phosphorylated cyclin-D1 (ccnd1), promoting its degradation by the proteasome, resulting in G1 arrest. The SCF(FBXO31) complex is however not a major regulator of ccnd1 stability during the G1/S transition. This Xenopus laevis (African clawed frog) protein is F-box only protein 31-B (fbxo31-b).